A 154-amino-acid polypeptide reads, in one-letter code: Small heat shock protein IbpB (154 aa).

The sHSP domain maps to 26–137; that stretch reads GQEPQGFPPY…QPQRIAIGSA (112 aa).

The protein belongs to the small heat shock protein (HSP20) family. As to quaternary structure, homodimer. Forms homomultimers of about 100-150 subunits at optimal growth temperatures. Conformation changes to oligomers at high temperatures or high ionic concentrations. The decrease in size of the multimers is accompanied by an increase in chaperone activity.

The protein resides in the cytoplasm. Associates with aggregated proteins, together with IbpA, to stabilize and protect them from irreversible denaturation and extensive proteolysis during heat shock and oxidative stress. Aggregated proteins bound to the IbpAB complex are more efficiently refolded and reactivated by the ATP-dependent chaperone systems ClpB and DnaK/DnaJ/GrpE. Its activity is ATP-independent. This chain is Small heat shock protein IbpB, found in Yersinia pseudotuberculosis serotype O:1b (strain IP 31758).